The primary structure comprises 256 residues: Ras-related protein RabJ (256 aa).

16 to 23 (GSSDVGKT) lines the GTP pocket. The short motif at 38-46 (LTSTIGASF) is the Effector region element. Residues 64–68 (DSAGQ) and 122–125 (NKID) contribute to the GTP site. Residues 229–256 (NGHLQGSINGHNNQNSTNYSDNSDQCCG) are disordered. The span at 230-256 (GHLQGSINGHNNQNSTNYSDNSDQCCG) shows a compositional bias: polar residues. Residues C254 and C255 are each lipidated (S-geranylgeranyl cysteine).

Belongs to the small GTPase superfamily. Rab family.

It localises to the cell membrane. The protein is Ras-related protein RabJ (rabJ) of Dictyostelium discoideum (Social amoeba).